We begin with the raw amino-acid sequence, 321 residues long: Phospho-N-acetylmuramoyl-pentapeptide-transferase (321 aa).

A run of 10 helical transmembrane segments spans residues 6-26 (ALIP…LFIG), 50-70 (GTPT…GIWV), 82-102 (LFIL…DDFI), 118-138 (LLGQ…EGYP), 143-163 (FFGI…FWLV), 175-195 (IDGL…IIAW), 200-220 (YDVL…FAYN), 226-246 (IFMG…ISIM), 251-271 (WTLL…MLQV), and 301-321 (IDII…WFIW).

The protein belongs to the glycosyltransferase 4 family. MraY subfamily. Requires Mg(2+) as cofactor.

Its subcellular location is the cell membrane. The enzyme catalyses UDP-N-acetyl-alpha-D-muramoyl-L-alanyl-gamma-D-glutamyl-L-lysyl-D-alanyl-D-alanine + di-trans,octa-cis-undecaprenyl phosphate = Mur2Ac(oyl-L-Ala-gamma-D-Glu-L-Lys-D-Ala-D-Ala)-di-trans,octa-cis-undecaprenyl diphosphate + UMP. It participates in cell wall biogenesis; peptidoglycan biosynthesis. Functionally, catalyzes the initial step of the lipid cycle reactions in the biosynthesis of the cell wall peptidoglycan: transfers peptidoglycan precursor phospho-MurNAc-pentapeptide from UDP-MurNAc-pentapeptide onto the lipid carrier undecaprenyl phosphate, yielding undecaprenyl-pyrophosphoryl-MurNAc-pentapeptide, known as lipid I. The protein is Phospho-N-acetylmuramoyl-pentapeptide-transferase of Enterococcus hirae.